Consider the following 61-residue polypeptide: Large ribosomal subunit protein bL32 (61 aa).

Residues 1–16 (MAVPRRKTSPSRRGMR) show a composition bias toward basic residues. The interval 1–61 (MAVPRRKTSP…RQVLKVKKED (61 aa)) is disordered. Positions 17–44 (RSADALKKPTYVEDKDSGELRRPHHLDL) are enriched in basic and acidic residues.

The protein belongs to the bacterial ribosomal protein bL32 family.

This chain is Large ribosomal subunit protein bL32, found in Afipia carboxidovorans (strain ATCC 49405 / DSM 1227 / KCTC 32145 / OM5) (Oligotropha carboxidovorans).